Here is a 546-residue protein sequence, read N- to C-terminus: Probable lysosomal cobalamin transporter (546 aa).

Helical transmembrane passes span 8–28, 48–68, 102–122, and 141–161; these read LAQGWIPFTVVVVLAILFSWF, IIALFIALMTTALVPVDIFLV, ILYALLAFFVFVIIPFMYFFF, and YSIGFLIVASVLLLVGAFAPL. N-linked (GlcNAc...) asparagine glycosylation occurs at N167. Transmembrane regions (helical) follow at residues 189 to 209, 304 to 324, 352 to 372, and 407 to 427; these read TALSLLIGFLTLIGMLIMITY, MVFGAFFLLVALLIFVSLFIT, IIMVYAQIVFPLDYCLFLLVV, and ALLFMCVMLMLIVLSLNVMLF. 3 N-linked (GlcNAc...) asparagine glycosylation sites follow: N444, N452, and N459. Residues 495-515 form a helical membrane-spanning segment; the sequence is VWFFGACYYWGTWLFLVVFMT.

It belongs to the LIMR family. LMBRD1 subfamily.

The protein resides in the lysosome membrane. Its function is as follows. Probable lysosomal cobalamin transporter. Required to export cobalamin from lysosomes allowing its conversion to cofactors. This Nematostella vectensis (Starlet sea anemone) protein is Probable lysosomal cobalamin transporter.